The following is a 551-amino-acid chain: Hedycaryol synthase TPS20CT (551 aa).

The (2E,6E)-farnesyl diphosphate site is built by R266, D303, D307, R444, and D447. Mg(2+) contacts are provided by D303 and D307. Residues 303–307 (DDIYD) carry the DDXXD motif motif. D447, S451, and E455 together coordinate Mg(2+).

This sequence belongs to the terpene synthase family. Tpsb subfamily. Mg(2+) is required as a cofactor. The cofactor is Mn(2+). Highly expressed in glandular trichomes.

It carries out the reaction (2E,6E)-farnesyl diphosphate + H2O = (2E,6E)-hedycaryol + diphosphate. The protein operates within secondary metabolite biosynthesis; terpenoid biosynthesis. Involved in sesquiterpene olefins biosynthesis, constituants of cannabinoids and terpenoids-rich resins. Catalyzes primarily the conversion of (2E)-farnesyl diphosphate to hedycaryol, which is spontaneously converted to elemol as a thermal degradation product. In Cannabis sativa (Hemp), this protein is Hedycaryol synthase TPS20CT.